The primary structure comprises 186 residues: Chromophore lyase CpcS/CpeS 1 (186 aa).

The protein belongs to the CpcS/CpeS biliprotein lyase family.

Its function is as follows. Covalently attaches a chromophore to Cys residue(s) of phycobiliproteins. This chain is Chromophore lyase CpcS/CpeS 1, found in Synechocystis sp. (strain ATCC 27184 / PCC 6803 / Kazusa).